We begin with the raw amino-acid sequence, 92 residues long: Putative pterin-4-alpha-carbinolamine dehydratase (92 aa).

It belongs to the pterin-4-alpha-carbinolamine dehydratase family.

The catalysed reaction is (4aS,6R)-4a-hydroxy-L-erythro-5,6,7,8-tetrahydrobiopterin = (6R)-L-erythro-6,7-dihydrobiopterin + H2O. In Natronomonas pharaonis (strain ATCC 35678 / DSM 2160 / CIP 103997 / JCM 8858 / NBRC 14720 / NCIMB 2260 / Gabara) (Halobacterium pharaonis), this protein is Putative pterin-4-alpha-carbinolamine dehydratase.